Reading from the N-terminus, the 164-residue chain is MTVLTIEEMAETLAPRQAIAGLDLGTKTIGLSMSDLGRRFATPRTVIRRVKFAIDAQALLDFAQSEKVAGFVIGLPMNMDGSAGPRVQATRAFVRNMEQKTALPFVYWDERLSTVAAERTLLEMDVSRAKRAERIDSAAASFILQGALDRLSLLARSDGDEFSA.

It belongs to the YqgF nuclease family.

It is found in the cytoplasm. Could be a nuclease involved in processing of the 5'-end of pre-16S rRNA. The polypeptide is Putative pre-16S rRNA nuclease (Rhizobium johnstonii (strain DSM 114642 / LMG 32736 / 3841) (Rhizobium leguminosarum bv. viciae)).